Here is a 681-residue protein sequence, read N- to C-terminus: Auxin response factor 8 (681 aa).

The segment at residues 120–222 is a DNA-binding region (TF-B3); sequence FAKTLTQSDA…DLHVGIRRAK (103 aa). 2 disordered regions span residues 474–518 and 534–577; these read LRRP…AKPP and SLSG…TSSE. Composition is skewed to polar residues over residues 534-555 and 564-577; these read SLSGTTSPAATGNSSLNWNTEK and GVIQNSPTDNTSSE. Residues 595-675 enclose the PB1 domain; the sequence is PGQCKVFIES…RRLTILTDAG (81 aa).

It belongs to the ARF family. Homodimers and heterodimers. In terms of tissue distribution, expressed in roots, culms, leaves and young panicles.

Its subcellular location is the nucleus. Auxin response factors (ARFs) are transcriptional factors that bind specifically to the DNA sequence 5'-TGTCTC-3' found in the auxin-responsive promoter elements (AuxREs). This Oryza sativa subsp. japonica (Rice) protein is Auxin response factor 8 (ARF8).